The primary structure comprises 66 residues: Large ribosomal subunit protein uL29 (66 aa).

Belongs to the universal ribosomal protein uL29 family.

The chain is Large ribosomal subunit protein uL29 from Francisella tularensis subsp. tularensis (strain FSC 198).